Consider the following 64-residue polypeptide: Large ribosomal subunit protein uL30 (64 aa).

Residues 1–22 (MAKAAKTIKVEQTRSAIRRQHS) are disordered.

This sequence belongs to the universal ribosomal protein uL30 family. As to quaternary structure, part of the 50S ribosomal subunit.

The protein is Large ribosomal subunit protein uL30 of Nitrobacter hamburgensis (strain DSM 10229 / NCIMB 13809 / X14).